Here is a 465-residue protein sequence, read N- to C-terminus: 3-isopropylmalate dehydratase large subunit (465 aa).

[4Fe-4S] cluster contacts are provided by Cys347, Cys407, and Cys410.

Belongs to the aconitase/IPM isomerase family. LeuC type 1 subfamily. In terms of assembly, heterodimer of LeuC and LeuD. It depends on [4Fe-4S] cluster as a cofactor.

It catalyses the reaction (2R,3S)-3-isopropylmalate = (2S)-2-isopropylmalate. It participates in amino-acid biosynthesis; L-leucine biosynthesis; L-leucine from 3-methyl-2-oxobutanoate: step 2/4. In terms of biological role, catalyzes the isomerization between 2-isopropylmalate and 3-isopropylmalate, via the formation of 2-isopropylmaleate. The protein is 3-isopropylmalate dehydratase large subunit of Buchnera aphidicola subsp. Pemphigus spyrothecae.